The sequence spans 355 residues: Serum paraoxonase/arylesterase 1 (355 aa).

The cysteines at positions 42 and 353 are disulfide-linked. Ca(2+) is bound by residues Glu53 and Asp54. His115 functions as the Proton acceptor in the catalytic mechanism. Residues Ile117, Asn168, Asp169, and Asn224 each coordinate Ca(2+). Residue Asn253 is glycosylated (N-linked (GlcNAc...) asparagine). Ca(2+) contacts are provided by Asp269 and Asn270. Asn270 and Asn324 each carry an N-linked (GlcNAc...) asparagine glycan.

Belongs to the paraoxonase family. Homodimer. Interacts with CLU. The cofactor is Ca(2+). The signal sequence is not cleaved. In terms of tissue distribution, plasma, liver, kidney, heart, brain, small intestine and lung. In the plasma, associated with HDL.

It is found in the secreted. The protein resides in the extracellular space. It carries out the reaction a phenyl acetate + H2O = a phenol + acetate + H(+). The catalysed reaction is An aryl dialkyl phosphate + H2O = dialkyl phosphate + an aryl alcohol.. The enzyme catalyses an N-acyl-L-homoserine lactone + H2O = an N-acyl-L-homoserine + H(+). Functionally, hydrolyzes the toxic metabolites of a variety of organophosphorus insecticides. Capable of hydrolyzing a broad spectrum of organophosphate substrates and lactones, and a number of aromatic carboxylic acid esters. Mediates an enzymatic protection of low density lipoproteins against oxidative modification. In Mus musculus (Mouse), this protein is Serum paraoxonase/arylesterase 1 (Pon1).